Reading from the N-terminus, the 154-residue chain is Myoglobin (154 aa).

Residues 2 to 148 (GLSDGEWQLV…FRKDMASNYK (147 aa)) enclose the Globin domain. A Phosphoserine modification is found at serine 4. Residue histidine 65 coordinates nitrite. Histidine 65 contacts O2. Threonine 68 is modified (phosphothreonine). Histidine 94 lines the heme b pocket.

This sequence belongs to the globin family. In terms of assembly, monomeric.

Its subcellular location is the cytoplasm. The protein resides in the sarcoplasm. The catalysed reaction is Fe(III)-heme b-[protein] + nitric oxide + H2O = Fe(II)-heme b-[protein] + nitrite + 2 H(+). The enzyme catalyses H2O2 + AH2 = A + 2 H2O. In terms of biological role, monomeric heme protein which primary function is to store oxygen and facilitate its diffusion within muscle tissues. Reversibly binds oxygen through a pentacoordinated heme iron and enables its timely and efficient release as needed during periods of heightened demand. Depending on the oxidative conditions of tissues and cells, and in addition to its ability to bind oxygen, it also has a nitrite reductase activity whereby it regulates the production of bioactive nitric oxide. Under stress conditions, like hypoxia and anoxia, it also protects cells against reactive oxygen species thanks to its pseudoperoxidase activity. The protein is Myoglobin (MB) of Hylobates agilis (Agile gibbon).